Here is a 146-residue protein sequence, read N- to C-terminus: 3-dehydroquinate dehydratase (146 aa).

Catalysis depends on Tyr-22, which acts as the Proton acceptor. Substrate is bound by residues Asn-73, His-79, and Asp-86. The active-site Proton donor is the His-99. Substrate-binding positions include 100-101 and Arg-110; that span reads IS.

The protein belongs to the type-II 3-dehydroquinase family. Homododecamer.

The catalysed reaction is 3-dehydroquinate = 3-dehydroshikimate + H2O. Its pathway is metabolic intermediate biosynthesis; chorismate biosynthesis; chorismate from D-erythrose 4-phosphate and phosphoenolpyruvate: step 3/7. Functionally, catalyzes a trans-dehydration via an enolate intermediate. The sequence is that of 3-dehydroquinate dehydratase from Prochlorococcus marinus subsp. pastoris (strain CCMP1986 / NIES-2087 / MED4).